Reading from the N-terminus, the 335-residue chain is Glucokinase (335 aa).

11–16 (ADIGGT) lines the ATP pocket.

This sequence belongs to the bacterial glucokinase family.

Its subcellular location is the cytoplasm. It carries out the reaction D-glucose + ATP = D-glucose 6-phosphate + ADP + H(+). The protein is Glucokinase of Xanthomonas axonopodis pv. citri (strain 306).